Reading from the N-terminus, the 462-residue chain is Nuclear factor interleukin-3-regulated protein (462 aa).

The disordered stretch occupies residues 1–22; it reads MQLRKMQTIKKEPAPLDPTSSS. A Glycyl lysine isopeptide (Lys-Gly) (interchain with G-Cter in SUMO2) cross-link involves residue Lys24. The 64-residue stretch at 73–136 folds into the bZIP domain; that stretch reads DAMYWEKRRK…GLISSTAYAQ (64 aa). A basic motif region spans residues 79 to 95; it reads KRRKNNEAAKRSREKRR. A leucine-zipper region spans residues 99-106; it reads LVLENKLI. The disordered stretch occupies residues 188-214; sequence SDVSEVSSVEHTQESPAQGGCRSPENK. Lys214 participates in a covalent cross-link: Glycyl lysine isopeptide (Lys-Gly) (interchain with G-Cter in SUMO2). Lys219 participates in a covalent cross-link: Glycyl lysine isopeptide (Lys-Gly) (interchain with G-Cter in SUMO1); alternate. Residue Lys219 forms a Glycyl lysine isopeptide (Lys-Gly) (interchain with G-Cter in SUMO2); alternate linkage. The segment at 259–298 is disordered; it reads PPLLQVHGSTSNSPRTSEADEGVVGKSSDGEDEQQVPKGP. The span at 265-274 shows a compositional bias: polar residues; it reads HGSTSNSPRT. The interval 281 to 420 is necessary for transcriptional repression and sufficient for interaction with PER2; that stretch reads VVGKSSDGED…FKTGVVEVKD (140 aa). Phosphoserine is present on Ser301. Glycyl lysine isopeptide (Lys-Gly) (interchain with G-Cter in SUMO2) cross-links involve residues Lys314, Lys326, Lys332, Lys337, and Lys350. Ser353 is modified (phosphoserine). Glycyl lysine isopeptide (Lys-Gly) (interchain with G-Cter in SUMO2) cross-links involve residues Lys360, Lys394, Lys401, Lys406, Lys412, Lys419, Lys424, Lys434, and Lys448.

The protein belongs to the bZIP family. NFIL3 subfamily. As to quaternary structure, homodimer. Binds DNA as a dimer. Interacts with DR1. Interacts with PER2 and CRY2. Interacts with NR0B2. Interacts with NR1D1. Interacts with MYSM1. As to expression, expressed in suprachiasmatic nucleus and liver (at protein level). Expressed in suprachiasmatic nucleus, hippocampus, gyrus dentatus, piriform cortex, internal granular layer of olfactory bulb, dorsomedial hypothalamic nucleus, pontine nuclei, granular layer of cerebellum, liver and calvariae osteoblasts. Expressed in natural killer cell precursors in bone marrow.

The protein localises to the nucleus. In terms of biological role, acts as a transcriptional regulator that recognizes and binds to the sequence 5'-[GA]TTA[CT]GTAA[CT]-3', a sequence present in many cellular and viral promoters. Represses transcription from promoters with activating transcription factor (ATF) sites. Represses promoter activity in osteoblasts. Represses transcriptional activity of PER1. Represses transcriptional activity of PER2 via the B-site on the promoter. Activates transcription from the interleukin-3 promoter in T-cells. Competes for the same consensus-binding site with PAR DNA-binding factors (DBP, HLF and TEF). Component of the circadian clock that acts as a negative regulator for the circadian expression of PER2 oscillation in the cell-autonomous core clock. Protects pro-B cells from programmed cell death. Represses the transcription of CYP2A5. Positively regulates the expression and activity of CES2 by antagonizing the repressive action of NR1D1 on CES2. Required for the development of natural killer cell precursors. The sequence is that of Nuclear factor interleukin-3-regulated protein (Nfil3) from Mus musculus (Mouse).